Consider the following 379-residue polypeptide: Homoserine O-succinyltransferase (379 aa).

Residues 51-360 form the AB hydrolase-1 domain; it reads NAVLICHALS…DSPYGHDAFL (310 aa). The active-site Nucleophile is the S157. R227 is a binding site for substrate. Catalysis depends on residues D323 and H356. A substrate-binding site is contributed by D357.

This sequence belongs to the AB hydrolase superfamily. MetX family. As to quaternary structure, homodimer.

It is found in the cytoplasm. The enzyme catalyses L-homoserine + succinyl-CoA = O-succinyl-L-homoserine + CoA. It functions in the pathway amino-acid biosynthesis; L-methionine biosynthesis via de novo pathway; O-succinyl-L-homoserine from L-homoserine: step 1/1. Functionally, transfers a succinyl group from succinyl-CoA to L-homoserine, forming succinyl-L-homoserine. The protein is Homoserine O-succinyltransferase of Pseudomonas entomophila (strain L48).